Consider the following 443-residue polypeptide: Phosphoglucosamine mutase (443 aa).

S101 (phosphoserine intermediate) is an active-site residue. Mg(2+)-binding residues include S101, D239, D241, and D243. Residue S101 is modified to Phosphoserine.

Belongs to the phosphohexose mutase family. Mg(2+) serves as cofactor. Activated by phosphorylation.

It carries out the reaction alpha-D-glucosamine 1-phosphate = D-glucosamine 6-phosphate. Its function is as follows. Catalyzes the conversion of glucosamine-6-phosphate to glucosamine-1-phosphate. This Francisella tularensis subsp. holarctica (strain FTNF002-00 / FTA) protein is Phosphoglucosamine mutase.